A 556-amino-acid chain; its full sequence is Formate--tetrahydrofolate ligase (556 aa).

65–72 (TPAGEGKT) is a binding site for ATP.

This sequence belongs to the formate--tetrahydrofolate ligase family.

It catalyses the reaction (6S)-5,6,7,8-tetrahydrofolate + formate + ATP = (6R)-10-formyltetrahydrofolate + ADP + phosphate. It functions in the pathway one-carbon metabolism; tetrahydrofolate interconversion. This chain is Formate--tetrahydrofolate ligase, found in Symbiobacterium thermophilum (strain DSM 24528 / JCM 14929 / IAM 14863 / T).